A 69-amino-acid chain; its full sequence is Putative membrane protein insertion efficiency factor (69 aa).

This sequence belongs to the UPF0161 family.

The protein resides in the cell membrane. In terms of biological role, could be involved in insertion of integral membrane proteins into the membrane. The protein is Putative membrane protein insertion efficiency factor of Thermoanaerobacter pseudethanolicus (strain ATCC 33223 / 39E) (Clostridium thermohydrosulfuricum).